The primary structure comprises 476 residues: Beta-amyrin 28-monooxygenase (476 aa).

The chain crosses the membrane as a helical span at residues 2-22; it reads ELLYVCLVCVFVFLVSLLLLY. Cys-421 lines the heme pocket.

This sequence belongs to the cytochrome P450 family. Heme is required as a cofactor. As to expression, specifically expressed in roots.

The protein resides in the membrane. The catalysed reaction is beta-amyrin + 3 reduced [NADPH--hemoprotein reductase] + 3 O2 = oleanolate + 3 oxidized [NADPH--hemoprotein reductase] + 4 H2O + 4 H(+). Its function is as follows. Catalyzes the carboxylation of beta-amyrin at the C-28 position to form oleanolate. Catalyzes the carboxylation of alpha-amyrin at the C-28 position to form ursolate. This chain is Beta-amyrin 28-monooxygenase (CYP716A44), found in Solanum lycopersicum (Tomato).